The chain runs to 190 residues: Potassium-transporting ATPase KdpC subunit (190 aa).

The helical transmembrane segment at 13–33 threads the bilayer; the sequence is VGFLLLTLMCGVVYPGIVTIF.

It belongs to the KdpC family. As to quaternary structure, the system is composed of three essential subunits: KdpA, KdpB and KdpC.

Its subcellular location is the cell membrane. Its function is as follows. Part of the high-affinity ATP-driven potassium transport (or Kdp) system, which catalyzes the hydrolysis of ATP coupled with the electrogenic transport of potassium into the cytoplasm. This subunit acts as a catalytic chaperone that increases the ATP-binding affinity of the ATP-hydrolyzing subunit KdpB by the formation of a transient KdpB/KdpC/ATP ternary complex. This is Potassium-transporting ATPase KdpC subunit from Listeria monocytogenes serotype 4a (strain HCC23).